Reading from the N-terminus, the 303-residue chain is Ribosomal RNA small subunit methyltransferase A (303 aa).

S-adenosyl-L-methionine-binding residues include asparagine 37, valine 39, glycine 64, glutamate 85, aspartate 115, and asparagine 138.

The protein belongs to the class I-like SAM-binding methyltransferase superfamily. rRNA adenine N(6)-methyltransferase family. RsmA subfamily.

It is found in the cytoplasm. The catalysed reaction is adenosine(1518)/adenosine(1519) in 16S rRNA + 4 S-adenosyl-L-methionine = N(6)-dimethyladenosine(1518)/N(6)-dimethyladenosine(1519) in 16S rRNA + 4 S-adenosyl-L-homocysteine + 4 H(+). Specifically dimethylates two adjacent adenosines (A1518 and A1519) in the loop of a conserved hairpin near the 3'-end of 16S rRNA in the 30S particle. May play a critical role in biogenesis of 30S subunits. The chain is Ribosomal RNA small subunit methyltransferase A from Bifidobacterium adolescentis (strain ATCC 15703 / DSM 20083 / NCTC 11814 / E194a).